A 676-amino-acid polypeptide reads, in one-letter code: Phosphatidylinositol-3,5-bisphosphate 3-phosphatase MTMR6 (676 aa).

Residues 125-501 (GWRRLDWNSE…ARFTVWTAMY (377 aa)) enclose the Myotubularin phosphatase domain. 3 residues coordinate a 1,2-diacyl-sn-glycero-3-phospho-(1D-myo-inositol-3,5-bisphosphate): asparagine 249, asparagine 274, and isoleucine 275. A 1,2-diacyl-sn-glycero-3-phospho-(1D-myo-inositol-3-phosphate) is bound by residues asparagine 249, asparagine 274, and isoleucine 275. Substrate contacts are provided by residues 249–252 (NKVQ), 274–275 (NI), and 335–341 (CSDGWDR). Cysteine 335 acts as the Phosphocysteine intermediate in catalysis. The a 1,2-diacyl-sn-glycero-3-phospho-(1D-myo-inositol-3,5-bisphosphate) site is built by serine 336, aspartate 337, glycine 338, tryptophan 339, aspartate 340, arginine 341, lysine 377, and arginine 381. Positions 336, 337, 338, 339, 340, and 341 each coordinate a 1,2-diacyl-sn-glycero-3-phospho-(1D-myo-inositol-3-phosphate). Arginine 381 contributes to the a 1,2-diacyl-sn-glycero-3-phospho-(1D-myo-inositol-3-phosphate) binding site. Arginine 381 is a binding site for substrate. The FYVE-type zinc finger occupies 618–675 (KWQPLRGADRCSNPACRGEFSSTIERRIHCHLCGMIFCRRCLKVSADERERVCDKCKT).

This sequence belongs to the protein-tyrosine phosphatase family. Non-receptor class myotubularin subfamily. As to quaternary structure, heterodimer with mtm-9. As to expression, expressed in intestinal cells. Expressed in head neurons, pre-anal ganglion, hypodermal cells, anal depressor muscle and non-neuronal cells in the tail.

The protein resides in the cytoplasm. The protein localises to the membrane. It is found in the apical cell membrane. The catalysed reaction is a 1,2-diacyl-sn-glycero-3-phospho-(1D-myo-inositol-3,5-bisphosphate) + H2O = a 1,2-diacyl-sn-glycero-3-phospho-(1D-myo-inositol-5-phosphate) + phosphate. The enzyme catalyses a 1,2-diacyl-sn-glycero-3-phospho-(1D-myo-inositol-3-phosphate) + H2O = a 1,2-diacyl-sn-glycero-3-phospho-(1D-myo-inositol) + phosphate. It carries out the reaction 1,2-dioctanoyl-sn-glycero-3-phospho-(1D-myo-inositol-3,5-bisphosphate) + H2O = 1,2-dioctanoyl-sn-glycero-3-phospho-(1D-myo-inositol-5-phosphate) + phosphate. It catalyses the reaction 1,2-dioctanoyl-sn-glycero-3-phospho-(1-D-myo-inositol-3-phosphate) + H2O = 1,2-dioctanoyl-sn-glycero-3-phospho-(1D-myo-inositol) + phosphate. Functionally, probable lipid phosphatase that specifically dephosphorylates the D-3 position of phosphatidylinositol 3-phosphate and phosphatidylinositol 3,5-bisphosphate, generating phosphatidylinositol and phosphatidylinositol 5-phosphate. In association with mtm-9, plays a role in endosome trafficking probably by regulating phosphatidylinositol-3-phosphate levels. Regulates fluid phase endocytosis in coelomocytes. Controls the endosomal localization of sorting nexin snx-3 and the levels of sorting receptor mig-14. By regulating the retrograde transport of mig-14, may be involved in the secretion of Wnt ligands such as egl-20. Regulates posterior migration of QL neuroblast descendants and the anterior migration of QR neuroblast descendants and HSN neurons during larval development. Involved in the formation of correct synapse number in DA9 motor neurons probably in part by regulating the secretion of Wnt ligand egl-20. In Caenorhabditis elegans, this protein is Phosphatidylinositol-3,5-bisphosphate 3-phosphatase MTMR6.